The primary structure comprises 341 residues: Adenosine deaminase (341 aa).

Zn(2+) is bound by residues histidine 15 and histidine 17. Residues histidine 17, aspartate 19, and glycine 172 each contribute to the substrate site. A Zn(2+)-binding site is contributed by histidine 199. Glutamate 202 (proton donor) is an active-site residue. Residue aspartate 279 participates in Zn(2+) binding.

It belongs to the metallo-dependent hydrolases superfamily. Adenosine and AMP deaminases family. Adenosine deaminase subfamily. Requires Zn(2+) as cofactor.

It carries out the reaction adenosine + H2O + H(+) = inosine + NH4(+). It catalyses the reaction 2'-deoxyadenosine + H2O + H(+) = 2'-deoxyinosine + NH4(+). Functionally, catalyzes the hydrolytic deamination of adenosine and 2-deoxyadenosine. The chain is Adenosine deaminase from Streptococcus equi subsp. zooepidemicus (strain MGCS10565).